The chain runs to 144 residues: uncharacterized protein (144 aa).

Residues 124 to 133 (KALNRKKSKT) show a composition bias toward basic residues. The tract at residues 124–144 (KALNRKKSKTKNGEKNGEGKS) is disordered. Basic and acidic residues predominate over residues 134–144 (KNGEKNGEGKS).

This is an uncharacterized protein from Acidianus filamentous virus 1 (isolate United States/Yellowstone) (AFV-1).